A 65-amino-acid chain; its full sequence is Large ribosomal subunit protein bL35 (65 aa).

A disordered region spans residues 1 to 22 (MPKIKTVRGAAKRFKKTGKGGF). Over residues 10 to 22 (AAKRFKKTGKGGF) the composition is skewed to basic residues.

The protein belongs to the bacterial ribosomal protein bL35 family.

This Escherichia coli O127:H6 (strain E2348/69 / EPEC) protein is Large ribosomal subunit protein bL35.